The primary structure comprises 123 residues: Secreted RxLR effector protein RXLR-C21 (123 aa).

The signal sequence occupies residues 1 to 23 (MRLHLLVLSVIVVSLLVSDNAHA). The RxLR-dEER signature appears at 32 to 65 (RALRETPINGLVTNQLAVSRNLTPAKFITNSEER). A helical transmembrane segment spans residues 101-121 (VTTICSIVLFVMVFGCLYKIF).

It belongs to the RxLR effector family.

Its subcellular location is the secreted. The protein resides in the host endoplasmic reticulum membrane. Secreted effector that does not suppress pattern-triggered immunity (PTI) in plant host. This chain is Secreted RxLR effector protein RXLR-C21, found in Plasmopara halstedii (Downy mildew of sunflower).